We begin with the raw amino-acid sequence, 168 residues long: Protein-export protein SecB (168 aa).

This sequence belongs to the SecB family. As to quaternary structure, homotetramer, a dimer of dimers. One homotetramer interacts with 1 SecA dimer.

Its subcellular location is the cytoplasm. Its function is as follows. One of the proteins required for the normal export of preproteins out of the cell cytoplasm. It is a molecular chaperone that binds to a subset of precursor proteins, maintaining them in a translocation-competent state. It also specifically binds to its receptor SecA. The protein is Protein-export protein SecB of Glaesserella parasuis serovar 5 (strain SH0165) (Haemophilus parasuis).